We begin with the raw amino-acid sequence, 365 residues long: Peptide chain release factor 2 (365 aa).

Residue Gln252 is modified to N5-methylglutamine.

It belongs to the prokaryotic/mitochondrial release factor family. In terms of processing, methylated by PrmC. Methylation increases the termination efficiency of RF2.

It localises to the cytoplasm. Peptide chain release factor 2 directs the termination of translation in response to the peptide chain termination codons UGA and UAA. This Escherichia coli (strain K12 / MC4100 / BW2952) protein is Peptide chain release factor 2.